The chain runs to 372 residues: ATP phosphoribosyltransferase regulatory subunit (372 aa).

This sequence belongs to the class-II aminoacyl-tRNA synthetase family. HisZ subfamily. In terms of assembly, heteromultimer composed of HisG and HisZ subunits.

It localises to the cytoplasm. Its pathway is amino-acid biosynthesis; L-histidine biosynthesis; L-histidine from 5-phospho-alpha-D-ribose 1-diphosphate: step 1/9. Required for the first step of histidine biosynthesis. May allow the feedback regulation of ATP phosphoribosyltransferase activity by histidine. This chain is ATP phosphoribosyltransferase regulatory subunit, found in Rhizobium rhizogenes (strain K84 / ATCC BAA-868) (Agrobacterium radiobacter).